Reading from the N-terminus, the 829-residue chain is Leucine--tRNA ligase (829 aa).

The 'HIGH' region signature appears at 40–51 (PYPSGAGLHVGH). Positions 609-613 (KMSKS) match the 'KMSKS' region motif. Lys-612 provides a ligand contact to ATP.

The protein belongs to the class-I aminoacyl-tRNA synthetase family.

It localises to the cytoplasm. The catalysed reaction is tRNA(Leu) + L-leucine + ATP = L-leucyl-tRNA(Leu) + AMP + diphosphate. In Lactococcus lactis subsp. lactis (strain IL1403) (Streptococcus lactis), this protein is Leucine--tRNA ligase.